The following is a 228-amino-acid chain: Phosphoenolpyruvate guanylyltransferase (228 aa).

Positions 148, 164, and 167 each coordinate phosphoenolpyruvate.

Belongs to the CofC family.

It carries out the reaction phosphoenolpyruvate + GTP + H(+) = enolpyruvoyl-2-diphospho-5'-guanosine + diphosphate. It participates in cofactor biosynthesis; coenzyme F420 biosynthesis. Its function is as follows. Guanylyltransferase that catalyzes the activation of phosphoenolpyruvate (PEP) as enolpyruvoyl-2-diphospho-5'-guanosine, via the condensation of PEP with GTP. It is involved in the biosynthesis of coenzyme F420, a hydride carrier cofactor. In Thermomonospora curvata (strain ATCC 19995 / DSM 43183 / JCM 3096 / KCTC 9072 / NBRC 15933 / NCIMB 10081 / Henssen B9), this protein is Phosphoenolpyruvate guanylyltransferase.